A 183-amino-acid polypeptide reads, in one-letter code: MFSMVNGFRNYSQQAIQASRYIGQGFIVTLDHMNRLPMTIQYPYEKLVPSERFRGRIHFEFDKCIACEVCVRVCPINLPVVDWKFKKDIKKKQLKSYSIDFGVCIFCGNCVEYCPTNCLSMTEEYELSTYDRHELNYDQIALGRLPISIIEDRTIESISSFDFSSKKIMEEHSKSRTVTKFLD.

4Fe-4S ferredoxin-type domains follow at residues 55-84 (GRIHFEFDKCIACEVCVRVCPINLPVVDWK) and 95-124 (KSYSIDFGVCIFCGNCVEYCPTNCLSMTEE). Positions 64, 67, 70, 74, 104, 107, 110, and 114 each coordinate [4Fe-4S] cluster.

It belongs to the complex I 23 kDa subunit family. NDH is composed of at least 16 different subunits, 5 of which are encoded in the nucleus. [4Fe-4S] cluster serves as cofactor.

The protein resides in the plastid. The protein localises to the chloroplast thylakoid membrane. It carries out the reaction a plastoquinone + NADH + (n+1) H(+)(in) = a plastoquinol + NAD(+) + n H(+)(out). The enzyme catalyses a plastoquinone + NADPH + (n+1) H(+)(in) = a plastoquinol + NADP(+) + n H(+)(out). Functionally, NDH shuttles electrons from NAD(P)H:plastoquinone, via FMN and iron-sulfur (Fe-S) centers, to quinones in the photosynthetic chain and possibly in a chloroplast respiratory chain. The immediate electron acceptor for the enzyme in this species is believed to be plastoquinone. Couples the redox reaction to proton translocation, and thus conserves the redox energy in a proton gradient. The sequence is that of NAD(P)H-quinone oxidoreductase subunit I, chloroplastic from Anthoceros angustus (Hornwort).